We begin with the raw amino-acid sequence, 202 residues long: Holliday junction branch migration complex subunit RuvA (202 aa).

The interval 1 to 63 (MIAFLSGRVV…EDSLTLFGFA (63 aa)) is domain I. The domain II stretch occupies residues 64–142 (DDDERDTFER…EPGGDTAATP (79 aa)). The segment at 143 to 152 (EQSAAAAPRN) is flexible linker. The interval 152-202 (NWRAQVVSGLVNLGWSTREAEAAADAVAAEAGEQPDVAALLRSALRRLSRA) is domain III.

This sequence belongs to the RuvA family. As to quaternary structure, homotetramer. Forms an RuvA(8)-RuvB(12)-Holliday junction (HJ) complex. HJ DNA is sandwiched between 2 RuvA tetramers; dsDNA enters through RuvA and exits via RuvB. An RuvB hexamer assembles on each DNA strand where it exits the tetramer. Each RuvB hexamer is contacted by two RuvA subunits (via domain III) on 2 adjacent RuvB subunits; this complex drives branch migration. In the full resolvosome a probable DNA-RuvA(4)-RuvB(12)-RuvC(2) complex forms which resolves the HJ.

It localises to the cytoplasm. Functionally, the RuvA-RuvB-RuvC complex processes Holliday junction (HJ) DNA during genetic recombination and DNA repair, while the RuvA-RuvB complex plays an important role in the rescue of blocked DNA replication forks via replication fork reversal (RFR). RuvA specifically binds to HJ cruciform DNA, conferring on it an open structure. The RuvB hexamer acts as an ATP-dependent pump, pulling dsDNA into and through the RuvAB complex. HJ branch migration allows RuvC to scan DNA until it finds its consensus sequence, where it cleaves and resolves the cruciform DNA. The protein is Holliday junction branch migration complex subunit RuvA of Thermobifida fusca (strain YX).